The primary structure comprises 122 residues: Large ribosomal subunit protein uL14c (122 aa).

It belongs to the universal ribosomal protein uL14 family. In terms of assembly, part of the 50S ribosomal subunit.

The protein resides in the plastid. The protein localises to the chloroplast. Its function is as follows. Binds to 23S rRNA. The sequence is that of Large ribosomal subunit protein uL14c from Staurastrum punctulatum (Green alga).